The sequence spans 189 residues: Glycerol-3-phosphate acyltransferase (189 aa).

Helical transmembrane passes span Met-1 to Leu-21, Leu-51 to His-71, Leu-77 to Phe-97, Met-111 to Phe-131, and Leu-151 to Val-171.

This sequence belongs to the PlsY family. Probably interacts with PlsX.

It is found in the cell inner membrane. The enzyme catalyses an acyl phosphate + sn-glycerol 3-phosphate = a 1-acyl-sn-glycero-3-phosphate + phosphate. It functions in the pathway lipid metabolism; phospholipid metabolism. Its function is as follows. Catalyzes the transfer of an acyl group from acyl-phosphate (acyl-PO(4)) to glycerol-3-phosphate (G3P) to form lysophosphatidic acid (LPA). This enzyme utilizes acyl-phosphate as fatty acyl donor, but not acyl-CoA or acyl-ACP. The protein is Glycerol-3-phosphate acyltransferase of Pseudomonas fluorescens (strain ATCC BAA-477 / NRRL B-23932 / Pf-5).